Here is a 363-residue protein sequence, read N- to C-terminus: Uptake hydrogenase small subunit (363 aa).

Residues 1 to 46 (MGAATETFYSVIRRQGITRRSFHKFCSLTATSLGLGPLAASRIANA) constitute a signal peptide (tat-type signal). [4Fe-4S] cluster-binding residues include cysteine 63, cysteine 66, cysteine 161, cysteine 195, histidine 233, cysteine 236, cysteine 261, and cysteine 267. Cysteine 276, cysteine 295, and cysteine 298 together coordinate [3Fe-4S] cluster.

This sequence belongs to the [NiFe]/[NiFeSe] hydrogenase small subunit family. As to quaternary structure, heterodimer of a large and a small subunit. Requires [4Fe-4S] cluster as cofactor. [3Fe-4S] cluster is required as a cofactor. Post-translationally, predicted to be exported by the Tat system. The position of the signal peptide cleavage has not been experimentally proven.

It is found in the cell membrane. The catalysed reaction is H2 + A = AH2. In terms of biological role, this enzyme recycles the H(2) produced by nitrogenase to increase the production of ATP and to protect nitrogenase against inhibition or damage by O(2) under carbon- or phosphate-limited conditions. This chain is Uptake hydrogenase small subunit (hupA), found in Bradyrhizobium diazoefficiens (strain JCM 10833 / BCRC 13528 / IAM 13628 / NBRC 14792 / USDA 110).